The following is a 138-amino-acid chain: ATP synthase epsilon chain (138 aa).

The protein belongs to the ATPase epsilon chain family. F-type ATPases have 2 components, CF(1) - the catalytic core - and CF(0) - the membrane proton channel. CF(1) has five subunits: alpha(3), beta(3), gamma(1), delta(1), epsilon(1). CF(0) has three main subunits: a, b and c.

Its subcellular location is the cell inner membrane. Produces ATP from ADP in the presence of a proton gradient across the membrane. This is ATP synthase epsilon chain from Polaromonas naphthalenivorans (strain CJ2).